Consider the following 338-residue polypeptide: Anthranilate phosphoribosyltransferase (338 aa).

5-phospho-alpha-D-ribose 1-diphosphate is bound by residues Gly-83, Gly-86 to Asp-87, Ser-91, Asn-93 to Thr-96, Lys-111 to Ser-119, and Ala-123. Gly-83 is a binding site for anthranilate. Ser-95 provides a ligand contact to Mg(2+). Residue Asn-114 participates in anthranilate binding. Arg-169 is an anthranilate binding site. The Mg(2+) site is built by Asp-228 and Glu-229.

This sequence belongs to the anthranilate phosphoribosyltransferase family. As to quaternary structure, homodimer. Mg(2+) serves as cofactor.

The catalysed reaction is N-(5-phospho-beta-D-ribosyl)anthranilate + diphosphate = 5-phospho-alpha-D-ribose 1-diphosphate + anthranilate. It participates in amino-acid biosynthesis; L-tryptophan biosynthesis; L-tryptophan from chorismate: step 2/5. Functionally, catalyzes the transfer of the phosphoribosyl group of 5-phosphorylribose-1-pyrophosphate (PRPP) to anthranilate to yield N-(5'-phosphoribosyl)-anthranilate (PRA). The sequence is that of Anthranilate phosphoribosyltransferase from Nitratidesulfovibrio vulgaris (strain DSM 19637 / Miyazaki F) (Desulfovibrio vulgaris).